The following is a 253-amino-acid chain: Large ribosomal subunit protein uL1m (253 aa).

The transit peptide at 1-81 directs the protein to the mitochondrion; it reads MSSLIALGKR…SIALKSNRRA (81 aa).

This sequence belongs to the universal ribosomal protein uL1 family. As to quaternary structure, component of the mitochondrial large ribosomal subunit (mt-LSU). Mature yeast 74S mitochondrial ribosomes consist of a small (37S) and a large (54S) subunit. The 37S small subunit contains a 15S ribosomal RNA (15S mt-rRNA) and at least 32 different proteins. The 54S large subunit contains a 21S rRNA (21S mt-rRNA) and at least 45 different proteins.

Its subcellular location is the mitochondrion. Its function is as follows. Component of the mitochondrial ribosome (mitoribosome), a dedicated translation machinery responsible for the synthesis of mitochondrial genome-encoded proteins, including at least some of the essential transmembrane subunits of the mitochondrial respiratory chain. The mitoribosomes are attached to the mitochondrial inner membrane and translation products are cotranslationally integrated into the membrane. This is Large ribosomal subunit protein uL1m (mrpl1) from Schizosaccharomyces pombe (strain 972 / ATCC 24843) (Fission yeast).